The chain runs to 188 residues: Ribosome-recycling factor (188 aa).

It belongs to the RRF family.

It localises to the cytoplasm. Responsible for the release of ribosomes from messenger RNA at the termination of protein biosynthesis. May increase the efficiency of translation by recycling ribosomes from one round of translation to another. The sequence is that of Ribosome-recycling factor from Lawsonia intracellularis (strain PHE/MN1-00).